The chain runs to 149 residues: UPF0179 protein MA_3685 (149 aa).

Belongs to the UPF0179 family.

This chain is UPF0179 protein MA_3685, found in Methanosarcina acetivorans (strain ATCC 35395 / DSM 2834 / JCM 12185 / C2A).